We begin with the raw amino-acid sequence, 370 residues long: Forkhead box protein I1-A (370 aa).

Disordered stretches follow at residues 1–28 (MNPV…AQEA), 212–269 (DNGN…CPSP), and 342–370 (SSLP…QGRY). Residues 127–221 (RPPYSYSALI…DNGNFRRKRK (95 aa)) constitute a DNA-binding region (fork-head). Residues 232–245 (AKREEDHVSPKGKE) show a composition bias toward basic and acidic residues. The span at 349–370 (QKQPPYLQQLHPQQSPLYQGRY) shows a compositional bias: low complexity.

In terms of tissue distribution, initially localized to the animal hemisphere (the presumptive ectoderm) of early-mid blastula embryos. Becomes restricted to head placodes, excluding the otic placodes, by the tailbud stages.

The protein resides in the nucleus. Its function is as follows. Transcription factor. Essential for ventral specification of the early cephalic (head) ectoderm during gastrulation, playing a role in the non-neural versus neural cell fate choice. Binds to DNA via the target sequence 5'-[AG]TAAA[CT]A-3', with 5'-ATAAACA-3' being the preferred binding site. This chain is Forkhead box protein I1-A (foxi1-a), found in Xenopus laevis (African clawed frog).